The primary structure comprises 71 residues: MPVVKVRENEPFDVALRRFKRSCEKAGILSEVRRREHYEKPTTVRKRAKAAAQKRHAKKLSRENARRVRLY.

The disordered stretch occupies residues 38 to 71 (YEKPTTVRKRAKAAAQKRHAKKLSRENARRVRLY). A compositionally biased stretch (basic residues) spans 43 to 59 (TVRKRAKAAAQKRHAKK). A compositionally biased stretch (basic and acidic residues) spans 60–71 (LSRENARRVRLY).

The protein belongs to the bacterial ribosomal protein bS21 family.

This Aliivibrio fischeri (strain ATCC 700601 / ES114) (Vibrio fischeri) protein is Small ribosomal subunit protein bS21.